The sequence spans 180 residues: ATP synthase subunit delta (180 aa).

The protein belongs to the ATPase delta chain family. As to quaternary structure, F-type ATPases have 2 components, F(1) - the catalytic core - and F(0) - the membrane proton channel. F(1) has five subunits: alpha(3), beta(3), gamma(1), delta(1), epsilon(1). F(0) has three main subunits: a(1), b(2) and c(10-14). The alpha and beta chains form an alternating ring which encloses part of the gamma chain. F(1) is attached to F(0) by a central stalk formed by the gamma and epsilon chains, while a peripheral stalk is formed by the delta and b chains.

Its subcellular location is the cell membrane. F(1)F(0) ATP synthase produces ATP from ADP in the presence of a proton or sodium gradient. F-type ATPases consist of two structural domains, F(1) containing the extramembraneous catalytic core and F(0) containing the membrane proton channel, linked together by a central stalk and a peripheral stalk. During catalysis, ATP synthesis in the catalytic domain of F(1) is coupled via a rotary mechanism of the central stalk subunits to proton translocation. Functionally, this protein is part of the stalk that links CF(0) to CF(1). It either transmits conformational changes from CF(0) to CF(1) or is implicated in proton conduction. This chain is ATP synthase subunit delta, found in Bacillus cereus (strain B4264).